The following is a 344-amino-acid chain: Arginine N-succinyltransferase (344 aa).

L125 contacts succinyl-CoA. The Proton donor role is filled by H229.

Belongs to the arginine N-succinyltransferase family.

The catalysed reaction is succinyl-CoA + L-arginine = N(2)-succinyl-L-arginine + CoA + H(+). It functions in the pathway amino-acid degradation; L-arginine degradation via AST pathway; L-glutamate and succinate from L-arginine: step 1/5. Catalyzes the transfer of succinyl-CoA to arginine to produce N(2)-succinylarginine. The protein is Arginine N-succinyltransferase of Escherichia coli O6:K15:H31 (strain 536 / UPEC).